We begin with the raw amino-acid sequence, 377 residues long: Proteinase-activated receptor 3 (377 aa).

The first 19 residues, 1 to 19, serve as a signal peptide directing secretion; the sequence is MRAAIFAAIGALLLSPASC. Residues 20 to 38 constitute a propeptide, removed for receptor activation; it reads QSGMEYDADNLAKPTLSIK. Residues 39–94 are Extracellular-facing; sequence TFRGAPQNSFEEFPLSAIEGWTGTTKTVKIKCPEELDSNLHVNNATMGYLSSPLST. N-linked (GlcNAc...) asparagine glycosylation is present at N82. Residues 95 to 120 form a helical membrane-spanning segment; it reads KLIPAIYILVFAVGMPANAVTLWMLF. Over 121-127 the chain is Cytoplasmic; the sequence is RTRTIRM. Residues 128–147 traverse the membrane as a helical segment; that stretch reads TIFYTNLAIADFLFCVTLPF. At 148 to 166 the chain is on the extracellular side; the sequence is RIAYHLNGNNWVFGEVMCR. C165 and C244 are disulfide-bonded. The chain crosses the membrane as a helical span at residues 167–188; that stretch reads ATTVIFYGNMYCSILLLACISI. The Cytoplasmic portion of the chain corresponds to 189 to 205; sequence NRYLAIVHPFTYRGLPK. Residues 206–229 form a helical membrane-spanning segment; the sequence is RTYALLTCGLVWTTVFLYMLPFFI. Residues 230 to 259 are Extracellular-facing; the sequence is LKQEYYLVQQDITTCHDVHNTCESSSPFQL. The chain crosses the membrane as a helical span at residues 260 to 279; it reads YYFISLAFFGFLIPFLVIIY. Residues 280–296 lie on the Cytoplasmic side of the membrane; it reads CYTAIIWTLNAKDRRWL. Residues 297-321 traverse the membrane as a helical segment; the sequence is WYIKASLLTFVIFTICFAPSNIILI. Topologically, residues 322–335 are extracellular; the sequence is IHHANYYYSNTDAL. The helical transmembrane segment at 336 to 360 threads the bilayer; that stretch reads YFVYLIALCLGSLNSCLDPFLYFLM. The Cytoplasmic segment spans residues 361–377; it reads SKITDHSTAYLTMVKLS.

Belongs to the G-protein coupled receptor 1 family. In terms of assembly, interacts with INSC/inscuteable and GPSM2. Post-translationally, a proteolytic cleavage generates a new N-terminus that functions as a tethered ligand.

It is found in the cell membrane. Functionally, receptor for activated thrombin coupled to G proteins that stimulate phosphoinositide hydrolysis. The chain is Proteinase-activated receptor 3 (F2RL2) from Bos taurus (Bovine).